The following is a 249-amino-acid chain: NH(3)-dependent NAD(+) synthetase (249 aa).

29–36 (GVSGGVDS) serves as a coordination point for ATP. A Mg(2+)-binding site is contributed by aspartate 35. Arginine 116 is a deamido-NAD(+) binding site. Threonine 136 contacts ATP. Position 141 (glutamate 141) interacts with Mg(2+). Lysine 149 and aspartate 156 together coordinate deamido-NAD(+). Residues lysine 165 and serine 187 each contribute to the ATP site. 233–234 (HK) provides a ligand contact to deamido-NAD(+).

The protein belongs to the NAD synthetase family. As to quaternary structure, homodimer.

The catalysed reaction is deamido-NAD(+) + NH4(+) + ATP = AMP + diphosphate + NAD(+) + H(+). Its pathway is cofactor biosynthesis; NAD(+) biosynthesis; NAD(+) from deamido-NAD(+) (ammonia route): step 1/1. In terms of biological role, catalyzes the ATP-dependent amidation of deamido-NAD to form NAD. Uses ammonia as a nitrogen source. The sequence is that of NH(3)-dependent NAD(+) synthetase from Syntrophomonas wolfei subsp. wolfei (strain DSM 2245B / Goettingen).